The chain runs to 573 residues: DNA ligase (573 aa).

Residue E250 participates in ATP binding. K252 functions as the N6-AMP-lysine intermediate in the catalytic mechanism. ATP contacts are provided by R257, R272, E301, F342, R432, and K438.

This sequence belongs to the ATP-dependent DNA ligase family. It depends on Mg(2+) as a cofactor.

It catalyses the reaction ATP + (deoxyribonucleotide)n-3'-hydroxyl + 5'-phospho-(deoxyribonucleotide)m = (deoxyribonucleotide)n+m + AMP + diphosphate.. In terms of biological role, DNA ligase that seals nicks in double-stranded DNA during DNA replication, DNA recombination and DNA repair. The polypeptide is DNA ligase (Methanococcus maripaludis (strain DSM 14266 / JCM 13030 / NBRC 101832 / S2 / LL)).